The chain runs to 151 residues: Snaclec 3 (151 aa).

The first 23 residues, 1–23 (MGRLVFVSFSLLVVFLSLSGTAA), serve as a signal peptide directing secretion. Cystine bridges form between Cys25/Cys36, Cys53/Cys149, and Cys125/Cys141. The 119-residue stretch at 32–150 (YEGHCYKPFN…CGEINPFVCK (119 aa)) folds into the C-type lectin domain.

This sequence belongs to the snaclec family. As to quaternary structure, heterodimer; disulfide-linked. In terms of tissue distribution, expressed by the venom gland.

It is found in the secreted. Functionally, interferes with one step of hemostasis (modulation of platelet aggregation, or coagulation cascade, for example). This Sistrurus catenatus edwardsii (Desert massasauga) protein is Snaclec 3.